The chain runs to 737 residues: Zinc finger protein 184 (737 aa).

A KRAB domain is found at 28–99 (VTFKDVVVNF…DSCIPVGPLE (72 aa)). Ser-117 is modified (phosphoserine). Lys-185 is covalently cross-linked (Glycyl lysine isopeptide (Lys-Gly) (interchain with G-Cter in SUMO2)). 17 C2H2-type zinc fingers span residues 201-223 (CKCN…QRTH), 229-251 (YKCN…QRIH), 257-279 (YKCD…QRIH), 285-307 (YKCD…QRIH), 313-335 (YTCT…QKIH), 341-363 (FKCE…QKIH), 369-391 (YKCN…HMIH), 397-419 (YECN…QKTH), 425-447 (YDCA…LKIH), 453-475 (YKCS…RRIH), 481-503 (FECS…QKTH), 509-531 (YECK…ERIH), 537-559 (YQCH…KKIH), 565-587 (YKCN…KRIH), 593-615 (YACP…QKTH), 621-643 (YQCN…QRIH), and 649-671 (YKCS…RSTH). The C2H2-type 18; degenerate zinc-finger motif lies at 677–698 (YNSECPQTFSQSTYLTQHQKIH). The C2H2-type 19 zinc-finger motif lies at 704–726 (LGCEDCEKAFQCHSALTKHQRLH).

The protein belongs to the krueppel C2H2-type zinc-finger protein family.

It localises to the nucleus. Its function is as follows. May be involved in transcriptional regulation. In Mus musculus (Mouse), this protein is Zinc finger protein 184 (Zfp184).